The sequence spans 207 residues: Imidazoleglycerol-phosphate dehydratase (207 aa).

The protein belongs to the imidazoleglycerol-phosphate dehydratase family.

It localises to the cytoplasm. It carries out the reaction D-erythro-1-(imidazol-4-yl)glycerol 3-phosphate = 3-(imidazol-4-yl)-2-oxopropyl phosphate + H2O. The protein operates within amino-acid biosynthesis; L-histidine biosynthesis; L-histidine from 5-phospho-alpha-D-ribose 1-diphosphate: step 6/9. The sequence is that of Imidazoleglycerol-phosphate dehydratase from Mycobacterium avium (strain 104).